The chain runs to 278 residues: Large ribosomal subunit protein uL24m (278 aa).

The KOW domain occupies 109–142 (FFPGDLVQVMVGKDKGRQGLVLTTSRDSSDVIVD).

It belongs to the universal ribosomal protein uL24 family.

The protein localises to the mitochondrion. This Caenorhabditis elegans protein is Large ribosomal subunit protein uL24m (mrpl-24).